Consider the following 701-residue polypeptide: Acetyl-coenzyme A synthetase, cytoplasmic (701 aa).

The segment at 1–41 (MGLPEERVRSGSGSRGQEEAGAGGRARSWSPPPEVSRSAHV) is disordered. An interaction with TFEB region spans residues 1–107 (MGLPEERVRS…GATTNICYNV (107 aa)). A phosphoserine mark is found at Ser-28, Ser-30, and Ser-36. 219-222 (RGEK) provides a ligand contact to CoA. Ser-263, Ser-265, and Ser-267 each carry phosphoserine. Thr-363 serves as a coordination point for CoA. Residue Lys-418 is modified to N6-acetyllysine. Residues 439–441 (GEP), 463–468 (DTFWQT), Asp-552, and Arg-567 each bind ATP. Residues Ser-575 and Arg-636 each coordinate CoA. The Nuclear localization signal motif lies at 656–668 (KTRSGKIMRRVLR). Ser-659 carries the phosphoserine; by AMPK modification. Position 661 is an N6-acetyllysine (Lys-661).

It belongs to the ATP-dependent AMP-binding enzyme family. Monomer. Interacts with TFEB. AMPK-mediated phosphorylated form at Ser-659 interacts with KPNA1; this interaction results in nuclear translocation of ACSS2. Interacts with the 'Thr-172' phosphorylated form of PRKAA2. Interacts with CREBBP. Reversibly acetylated at Lys-661. The acetyl-CoA synthase activity is inhibited by acetylation and activated by deacetylation mediated by the deacetylases SIRT1 and SIRT3. Post-translationally, glucose deprivation results in its AMPK-dependent phosphorylation at Ser-659, which leads to exposure of its nuclear localization signal, required for its interaction with KPNA1 and subsequent translocation to the nucleus.

The protein resides in the cytoplasm. The protein localises to the cytosol. Its subcellular location is the nucleus. It catalyses the reaction acetate + ATP + CoA = acetyl-CoA + AMP + diphosphate. The catalysed reaction is propanoate + ATP + CoA = propanoyl-CoA + AMP + diphosphate. Inhibited by acetylation at Lys-661 and activated by deacetylation mediated by the deacetylases SIRT1 and SIRT3. In terms of biological role, catalyzes the synthesis of acetyl-CoA from short-chain fatty acids. Acetate is the preferred substrate. Can also utilize propionate with a much lower affinity. Nuclear ACSS2 promotes glucose deprivation-induced lysosomal biogenesis and autophagy, tumor cell survival and brain tumorigenesis. Glucose deprivation results in AMPK-mediated phosphorylation of ACSS2 leading to its translocation to the nucleus where it binds to TFEB and locally produces acetyl-CoA for histone acetylation in the promoter regions of TFEB target genes thereby activating their transcription. The regulation of genes associated with autophagy and lysosomal activity through ACSS2 is important for brain tumorigenesis and tumor survival. Acts as a chromatin-bound transcriptional coactivator that up-regulates histone acetylation and expression of neuronal genes. Can be recruited to the loci of memory-related neuronal genes to maintain a local acetyl-CoA pool, providing the substrate for histone acetylation and promoting the expression of specific genes, which is essential for maintaining long-term spatial memory. This is Acetyl-coenzyme A synthetase, cytoplasmic (ACSS2) from Homo sapiens (Human).